The following is a 596-amino-acid chain: Adenine deaminase (596 aa).

Belongs to the metallo-dependent hydrolases superfamily. Adenine deaminase family. Requires Mn(2+) as cofactor.

It carries out the reaction adenine + H2O + H(+) = hypoxanthine + NH4(+). The chain is Adenine deaminase from Moorella thermoacetica (strain ATCC 39073 / JCM 9320).